The following is a 140-amino-acid chain: MGSSLVSVAEQLLKDLQRTYSEIKQIPDDLLIALRFVFGPCALQALDLVDQHSVTCVSSPSGRKAFQVLGGSGRLYTCFTSCHYCPCPAFSFTVLRRNESLMCKHLLAVILSQAMGLCQQEQVSDQQMTHILSRQPEAST.

The SWIM-type zinc-finger motif lies at 76-114 (YTCFTSCHYCPCPAFSFTVLRRNESLMCKHLLAVILSQA).

It belongs to the SWS1 family.

It localises to the nucleus. Functionally, involved in early stages of the homologous recombination repair (HRR) pathway of double-stranded DNA breaks arising during DNA replication or induced by DNA-damaging agents. The chain is Zinc finger SWIM domain-containing protein 7 (zswim7) from Danio rerio (Zebrafish).